A 396-amino-acid chain; its full sequence is Cell division protein FtsZ 1 (396 aa).

A disordered region spans residues 1 to 38 (MDSIVQDAIDEAEESEDSASEPADVAGGGGDTVPTGTM). Residues 8–19 (AIDEAEESEDSA) are compositionally biased toward acidic residues. GTP is bound by residues 61-65 (GAGSN), 148-150 (GTG), glutamate 179, arginine 183, and aspartate 226. The disordered stretch occupies residues 358–396 (QIYGRNEAAEGDGPAQESTPEPEPEPQAGSEIEDIDYVE).

Belongs to the FtsZ family. As to quaternary structure, homodimer. Polymerizes to form a dynamic ring structure in a strictly GTP-dependent manner. Interacts directly with several other division proteins.

The protein resides in the cytoplasm. In terms of biological role, essential cell division protein that forms a contractile ring structure (Z ring) at the future cell division site. The regulation of the ring assembly controls the timing and the location of cell division. One of the functions of the FtsZ ring is to recruit other cell division proteins to the septum to produce a new cell wall between the dividing cells. Binds GTP and shows GTPase activity. The protein is Cell division protein FtsZ 1 of Halobacterium salinarum (strain ATCC 29341 / DSM 671 / R1).